We begin with the raw amino-acid sequence, 130 residues long: Small ribosomal subunit protein uS11c (130 aa).

This sequence belongs to the universal ribosomal protein uS11 family. As to quaternary structure, part of the 30S ribosomal subunit.

Its subcellular location is the plastid. The protein resides in the chloroplast. This is Small ribosomal subunit protein uS11c from Phaeodactylum tricornutum (strain CCAP 1055/1).